Here is a 562-residue protein sequence, read N- to C-terminus: mRNA cleavage and polyadenylation factor CLP1 (562 aa).

The interval 1–27 (MSLPGLELSQQPIEARRAPPQPTQISL) is disordered. ATP contacts are provided by residues Glu32, Lys71, and 154–159 (DAGKTS). The disordered stretch occupies residues 415–483 (EDEYDPSKFD…STTPFTNLPS (69 aa)). Residues 445-479 (SLQPPSGLLPGLRSELPSATTGFPSASTSSTTPFT) show a composition bias toward low complexity.

It belongs to the Clp1 family. Clp1 subfamily. In terms of assembly, component of a pre-mRNA cleavage factor complex. Interacts directly with PCF11.

It is found in the nucleus. Its function is as follows. Required for endonucleolytic cleavage during polyadenylation-dependent pre-mRNA 3'-end formation. This chain is mRNA cleavage and polyadenylation factor CLP1, found in Coccidioides immitis (strain RS) (Valley fever fungus).